Here is a 20-residue protein sequence, read N- to C-terminus: Pommaclein (20 aa).

The protein belongs to the GASA family. In terms of tissue distribution, expressed in pulp (aril) of fruits (at protein level).

The protein is Pommaclein of Punica granatum (Pomegranate).